We begin with the raw amino-acid sequence, 181 residues long: Isopentenyl-diphosphate Delta-isomerase (181 aa).

Positions 25 and 32 each coordinate Mn(2+). Residues leucine 30–leucine 164 enclose the Nudix hydrolase domain. The active site involves cysteine 67. Mn(2+) is bound at residue histidine 69. Glutamate 87 lines the Mg(2+) pocket. Residues glutamate 114 and glutamate 116 each contribute to the Mn(2+) site. Glutamate 116 is a catalytic residue.

Belongs to the IPP isomerase type 1 family. Homodimer. The cofactor is Mg(2+). It depends on Mn(2+) as a cofactor.

It is found in the cytoplasm. It catalyses the reaction isopentenyl diphosphate = dimethylallyl diphosphate. It functions in the pathway isoprenoid biosynthesis; dimethylallyl diphosphate biosynthesis; dimethylallyl diphosphate from isopentenyl diphosphate: step 1/1. Catalyzes the 1,3-allylic rearrangement of the homoallylic substrate isopentenyl (IPP) to its highly electrophilic allylic isomer, dimethylallyl diphosphate (DMAPP). This Citrobacter koseri (strain ATCC BAA-895 / CDC 4225-83 / SGSC4696) protein is Isopentenyl-diphosphate Delta-isomerase.